Consider the following 470-residue polypeptide: Glucose-1-phosphate adenylyltransferase (470 aa).

Residues G165, 182 to 183 (EK), and S200 contribute to the alpha-D-glucose 1-phosphate site.

Belongs to the bacterial/plant glucose-1-phosphate adenylyltransferase family. Homotetramer.

It catalyses the reaction alpha-D-glucose 1-phosphate + ATP + H(+) = ADP-alpha-D-glucose + diphosphate. The protein operates within glycan biosynthesis; glycogen biosynthesis. In terms of biological role, involved in the biosynthesis of ADP-glucose, a building block required for the elongation reactions to produce glycogen. Catalyzes the reaction between ATP and alpha-D-glucose 1-phosphate (G1P) to produce pyrophosphate and ADP-Glc. The polypeptide is Glucose-1-phosphate adenylyltransferase (Paenarthrobacter aurescens (strain TC1)).